A 417-amino-acid chain; its full sequence is Serine/threonine-protein kinase SBK1 (417 aa).

The region spanning 53 to 318 is the Protein kinase domain; the sequence is YELVRELGKG…VFRFLKHELT (266 aa). ATP-binding positions include 59 to 67 and Lys82; that span reads LGKGTYGKV. Asp174 functions as the Proton acceptor in the catalytic mechanism. Positions 321 to 405 are disordered; it reads LRRRPSHRAR…TDGRTDKSKG (85 aa). Residues 363-382 are compositionally biased toward pro residues; sequence PSPPSVGPVVPVPVPVPVPV.

This sequence belongs to the protein kinase superfamily. Ser/Thr protein kinase family.

The protein resides in the cytoplasm. It carries out the reaction L-seryl-[protein] + ATP = O-phospho-L-seryl-[protein] + ADP + H(+). The catalysed reaction is L-threonyl-[protein] + ATP = O-phospho-L-threonyl-[protein] + ADP + H(+). Functionally, may be involved in signal-transduction pathways related to the control of brain development. This chain is Serine/threonine-protein kinase SBK1 (Sbk1), found in Mus musculus (Mouse).